The following is a 201-amino-acid chain: Large ribosomal subunit protein uL4 (201 aa).

Positions 46–71 are disordered; that stretch reads QKTRAEITGTGKKPWRQKGTGRARAG.

It belongs to the universal ribosomal protein uL4 family. In terms of assembly, part of the 50S ribosomal subunit.

Its function is as follows. One of the primary rRNA binding proteins, this protein initially binds near the 5'-end of the 23S rRNA. It is important during the early stages of 50S assembly. It makes multiple contacts with different domains of the 23S rRNA in the assembled 50S subunit and ribosome. Functionally, forms part of the polypeptide exit tunnel. This is Large ribosomal subunit protein uL4 from Shewanella amazonensis (strain ATCC BAA-1098 / SB2B).